Reading from the N-terminus, the 473-residue chain is Photosystem II CP43 reaction center protein (473 aa).

A propeptide spanning residues 1–14 (MKTLYSLRRFYPVE) is cleaved from the precursor. An N-acetylthreonine modification is found at T15. The residue at position 15 (T15) is a Phosphothreonine. 5 helical membrane passes run 69 to 93 (LFEVAHFVPEKPMYEQGFILLPHLA), 134 to 155 (LLGPETLEESFPFFGYVWKDRN), 178 to 200 (KALSFGGVYDTWAPGGGDVRKIT), 255 to 275 (KPFAWARRALVWSGEAYLSYS), and 291 to 312 (WFNNTAYPSEFYGPTGPEASQA). Residue E367 participates in [CaMn4O5] cluster binding. Residues 447 to 471 (RARAAAAGFEKGIDRDFEPVLSMTP) traverse the membrane as a helical segment.

The protein belongs to the PsbB/PsbC family. PsbC subfamily. PSII is composed of 1 copy each of membrane proteins PsbA, PsbB, PsbC, PsbD, PsbE, PsbF, PsbH, PsbI, PsbJ, PsbK, PsbL, PsbM, PsbT, PsbX, PsbY, PsbZ, Psb30/Ycf12, at least 3 peripheral proteins of the oxygen-evolving complex and a large number of cofactors. It forms dimeric complexes. It depends on Binds multiple chlorophylls and provides some of the ligands for the Ca-4Mn-5O cluster of the oxygen-evolving complex. It may also provide a ligand for a Cl- that is required for oxygen evolution. PSII binds additional chlorophylls, carotenoids and specific lipids. as a cofactor.

Its subcellular location is the plastid. It localises to the chloroplast thylakoid membrane. Its function is as follows. One of the components of the core complex of photosystem II (PSII). It binds chlorophyll and helps catalyze the primary light-induced photochemical processes of PSII. PSII is a light-driven water:plastoquinone oxidoreductase, using light energy to abstract electrons from H(2)O, generating O(2) and a proton gradient subsequently used for ATP formation. The polypeptide is Photosystem II CP43 reaction center protein (Pelargonium hortorum (Common geranium)).